The sequence spans 419 residues: DNA ligase (419 aa).

Positions 1–120 are NTD; the sequence is MLNHFPGHCS…ARQKRGAHTN (120 aa). Residues 121–317 form an AD domain region; it reads TGMIPPMLVK…NYHSAHLAKL (197 aa). Lys151 (N6-AMP-lysine intermediate) is an active-site residue. The segment at 318–419 is OB domain; it reads KPLLDAEFIL…REPINVLEII (102 aa).

Belongs to the ATP-dependent DNA ligase family.

Its subcellular location is the virion. It catalyses the reaction ATP + (deoxyribonucleotide)n-3'-hydroxyl + 5'-phospho-(deoxyribonucleotide)m = (deoxyribonucleotide)n+m + AMP + diphosphate.. Its function is as follows. Very low-fidelity DNA ligase that seals nicks in double-stranded DNA during DNA repair. Together with the viral repair DNA polymerase X, fills the single nucleotide gaps generated by the AP endonuclease. It is not essential for viral replication and recombination. Displays a very low adenylation activity towards DNA with 3'-dideoxy- or 3'-amino-terminated nicks compared to regular nick DNA. This chain is DNA ligase, found in Ornithodoros (relapsing fever ticks).